Consider the following 315-residue polypeptide: Bifunctional protein FolD (315 aa).

NADP(+)-binding positions include 166–168 (GRS), serine 193, and isoleucine 234.

This sequence belongs to the tetrahydrofolate dehydrogenase/cyclohydrolase family. In terms of assembly, homodimer.

The catalysed reaction is (6R)-5,10-methylene-5,6,7,8-tetrahydrofolate + NADP(+) = (6R)-5,10-methenyltetrahydrofolate + NADPH. The enzyme catalyses (6R)-5,10-methenyltetrahydrofolate + H2O = (6R)-10-formyltetrahydrofolate + H(+). It functions in the pathway one-carbon metabolism; tetrahydrofolate interconversion. Functionally, catalyzes the oxidation of 5,10-methylenetetrahydrofolate to 5,10-methenyltetrahydrofolate and then the hydrolysis of 5,10-methenyltetrahydrofolate to 10-formyltetrahydrofolate. This chain is Bifunctional protein FolD, found in Treponema pallidum (strain Nichols).